Consider the following 571-residue polypeptide: uncharacterized protein (571 aa).

Disordered regions lie at residues 71–128, 142–258, and 298–336; these read TNHY…RVTA, NKND…PQNE, and LNRQPETRRNCQCPEKQQTPPPEETQNAQENDDQQTTKR. A compositionally biased stretch (polar residues) spans 88–113; that stretch reads PNRSGVSSPVNDGASSPTQRGGTTPA. Pro residues predominate over residues 168 to 184; the sequence is RGYPGPGPRGYPGPGPR. Low complexity predominate over residues 205–215; it reads QGPRRYSCPGP. Gly residues predominate over residues 217–234; it reads GYPGPGSSGRPDPGGGLQ. The span at 311–326 shows a compositional bias: low complexity; that stretch reads PEKQQTPPPEETQNAQ.

This is an uncharacterized protein from Drosophila melanogaster (Fruit fly).